We begin with the raw amino-acid sequence, 150 residues long: Transmembrane protein PMIS2 (150 aa).

Low complexity predominate over residues 1 to 12; it reads MALKPPSATQPA. The tract at residues 1–61 is disordered; the sequence is MALKPPSATQ…EPQEPTQTPE (61 aa). Pro residues predominate over residues 13–22; sequence PNAPATPDAP. Residues 23–61 show a composition bias toward low complexity; it reads PTTGDPGASAAPGSPTTTGGPGAPAEVPQEPQEPTQTPE. The next 2 membrane-spanning stretches (helical) occupy residues 71-91 and 130-150; these read LCLT…ALYF and GWFG…LVLY.

It belongs to the CD225/Dispanin family.

Its subcellular location is the membrane. Functionally, may play a role in spermatozoa mobility. In Homo sapiens (Human), this protein is Transmembrane protein PMIS2.